The sequence spans 577 residues: MEGETLPLAQYLFKRLLQLGVDSIFGVPGDYNLTLLDHVVPSGLKWVGNCNELNAGYAADGYSRIKDIGAVVTTFGVGELSAINAIAGAYAEKAPVVHIVGTPMRASQESRALIHHTFNDGDYQRFDAIQEHVTVAQVSLSDHRTAPSEIDRILLQCLLHSRPVRIAIPVDMVPVLVPVAGLSSKIQIPPAVRQPQAEEAALNAVLKRIYSSKKPMILVDGETRSFGMLQRVNHFIQTIGWPTFTSGFGKGLVDETLPNVYGVCTLHQKAFVDSCDLVLVFGPHFSNTNSYNYFLKPADEKSVLFSPNSIQVNKDVFRDLPVGYFIEQLTQQLDISRIPTHKHDLVHPSLRTLPEVSPTDLVTQTGGFWKRFSPFLRTGDIILGETGTPGYGVNDFILPPQTRLFKPATWLSIGYMLPAALGASHAQRDLVASDQYHSLSNPRTILFIGDGSFQMTVQELSTIIHQKLNVIIFLINNDGYTIERCIHGRNQAYNDVAPWRYLKAAEFFGADQDGEYKASTWEVRTWADLDRVLNDSQLADGKGLRMVEVFMERLDAPDVLMGLLNNQVLRENAQSRL.

Substrate is bound by residues D30 and H116. The interval 388–482 is thiamine pyrophosphate binding; that stretch reads TPGYGVNDFI…FLINNDGYTI (95 aa). Positions 450, 477, and 479 each coordinate Mg(2+). E483 contacts substrate.

This sequence belongs to the TPP enzyme family. As to quaternary structure, homotetramer. A metal cation serves as cofactor. The cofactor is thiamine diphosphate.

It catalyses the reaction a 2-oxocarboxylate + H(+) = an aldehyde + CO2. This chain is Pyruvate decarboxylase (pdcA), found in Aspergillus parasiticus.